A 414-amino-acid chain; its full sequence is Histidine--tRNA ligase (414 aa).

The protein belongs to the class-II aminoacyl-tRNA synthetase family. As to quaternary structure, homodimer.

The protein localises to the cytoplasm. The enzyme catalyses tRNA(His) + L-histidine + ATP = L-histidyl-tRNA(His) + AMP + diphosphate + H(+). This Rickettsia conorii (strain ATCC VR-613 / Malish 7) protein is Histidine--tRNA ligase.